A 1452-amino-acid chain; its full sequence is ABC-type transporter adrC (1452 aa).

The segment at 1–38 (MAPEEGDQAMSHEDKAACSSLNTTSSTELFDGAPSSEN) is disordered. Residues 19-28 (SSLNTTSSTE) are compositionally biased toward polar residues. Residues 116–378 (KRLMSIVGNK…FETMGWKRPP (263 aa)) enclose the ABC transporter 1 domain. The next 6 helical transmembrane spans lie at 487 to 507 (IPAL…IGSL), 524 to 544 (VLFL…TTLY), 569 to 589 (VIVD…IVYF), 598 to 618 (SHFF…ATIF), 631 to 651 (AMAL…FTVP), and 738 to 758 (GILV…TELI). An ABC transporter 2 domain is found at 813 to 1055 (FSWKGLSYDI…TVLEYLEDKG (243 aa)). 849–856 (GVSGAGKT) serves as a coordination point for ATP. Helical transmembrane passes span 1149–1169 (YILA…FSFW), 1181–1201 (VLFS…QIMP), 1224–1244 (VFIL…GICT), 1264–1284 (LVLL…QLVV), 1287–1307 (VPSV…CLLF), 1322–1344 (IFMN…ALHG), and 1415–1435 (FGIF…LYYL).

Belongs to the ABC transporter superfamily. ABCG family. PDR (TC 3.A.1.205) subfamily.

The protein resides in the membrane. Its function is as follows. ABC-type transporter; part of the gene cluster that mediates the biosynthesis of the meroterpenoid compound andrastin A, a promising antitumoral compound. Is required for the production of andrastin A but does not have a significant role in its secretion. In Penicillium roqueforti, this protein is ABC-type transporter adrC.